Consider the following 706-residue polypeptide: MKFIHLAMTLAYSLPHIVDAFSTLSHQRIRTSNVGVSSIFTNSQRITTFSATPTTRRTTSLFSTTENKKSSELVSNQDLGLGTSGFSTSRIRNFSIIAHIDHGKSTLADRLLESTQTVAARDMAAQLLDNMDLERERGITIKLQAARVLYKSEVDGEMYILNLIDTPGHVDFSYEVSRSLAACEGALLVVDASQGVEAQTLANVYLALENNLEIIPVLNKIDLPAADPDRVAEEIEETIGIDCSDAVRASAKSGIGINDILESIVKNVPPPQPDTGGPFRALIFDSLFDPYRGVIVFFRVVDGAVKKGQKVRFLASKAEHDVTEVGIMQPNQVQVDCLRAGEVGYLCGSIKDVLDARVGDTITLSSEYKAAAAKLDPKSEEDPITPLPGYSESIPMVYCGIFPVDADQYENLRDALGKLRLNDAAISYEPETSGAMGFGFRCGFLGLLHMDVIRERLEREFDLDLIVTAPSVVYRVEKGEGDSKTVEIVDAPSKMPEILREMKVMEPYVRMEILTPSEYNGQIIELGQERRGILKDINYLTPTRSTIVYEVPLAEVITDFFDQLKSRTQGYASMEYQLIEYREGDLVRLDVKINYEDAPPLATIVHVDAAQTVGRRLVASLKELIPRQMFKVPIQACIGVKVIASASISPMRKDVLAKCYGGDLSRKKKLLQKQAKGKKRMKAMGKVNVPQEAFMAVIKLNKSAGD.

The tr-type G domain occupies 89-272 (SRIRNFSIIA…SIVKNVPPPQ (184 aa)). GTP is bound by residues 98-105 (AHIDHGKS), 165-169 (DTPGH), and 219-222 (NKID).

Belongs to the TRAFAC class translation factor GTPase superfamily. Classic translation factor GTPase family. LepA subfamily.

The protein resides in the mitochondrion inner membrane. It carries out the reaction GTP + H2O = GDP + phosphate + H(+). In terms of biological role, promotes mitochondrial protein synthesis. May act as a fidelity factor of the translation reaction, by catalyzing a one-codon backward translocation of tRNAs on improperly translocated ribosomes. Binds to mitochondrial ribosomes in a GTP-dependent manner. The protein is Translation factor GUF1 homolog, mitochondrial of Thalassiosira pseudonana (Marine diatom).